Consider the following 679-residue polypeptide: Stress-70 protein, mitochondrial (679 aa).

The transit peptide at 1–46 (MISASRAAAARLVGAAASRGPTAARHQDSWNGLSHEAFRLVSRRDY) directs the protein to the mitochondrion. The segment at 1 to 432 (MISASRAAAA…IQGGVLAGDV (432 aa)) is interaction with NFS1. ADP contacts are provided by Thr63 and Asn64. Positions 63–431 (TNSCVAVMEG…AIQGGVLAGD (369 aa)) are nucleotide-binding domain (NBD). At Lys76 the chain carries N6-acetyllysine. Residue Thr87 is modified to Phosphothreonine. Residues Lys135 and Lys138 each carry the N6-acetyllysine; alternate modification. An N6-succinyllysine; alternate mark is found at Lys135 and Lys138. The residue at position 143 (Lys143) is an N6-acetyllysine. Position 206 is an N6-acetyllysine; alternate (Lys206). Residue Lys206 is modified to N6-succinyllysine; alternate. The residue at position 206 (Lys206) is an N6-malonyllysine; alternate. N6-acetyllysine occurs at positions 234 and 288. The residue at position 300 (Lys300) is an N6-acetyllysine; alternate. An N6-succinyllysine; alternate modification is found at Lys300. Positions 313, 316, and 320 each coordinate ADP. Lys368 carries the N6-succinyllysine modification. ADP contacts are provided by Gly388 and Arg391. Lys394 is modified (N6-succinyllysine). The residue at position 408 (Ser408) is a Phosphoserine. Residues 432-441 (VTDVLLLDVT) are interdomain linker. The segment at 432–679 (VTDVLLLDVT…QKEDQKEEKQ (248 aa)) is interaction with FXN and ISCU. A substrate-binding domain (SBD) region spans residues 442-679 (PLSLGIETLG…QKEDQKEEKQ (238 aa)). Arg513 is modified (omega-N-methylarginine). Residues Lys567 and Lys600 each carry the N6-acetyllysine; alternate modification. 2 positions are modified to N6-succinyllysine; alternate: Lys567 and Lys600. Lys610 carries the N6-succinyllysine modification. Lys612 carries the post-translational modification N6-acetyllysine. Lys646 is subject to N6-acetyllysine; alternate. Residue Lys646 is modified to N6-succinyllysine; alternate. The interval 656–679 (ASEREGSGSSGTGEQKEDQKEEKQ) is disordered. Basic and acidic residues predominate over residues 669–679 (EQKEDQKEEKQ).

The protein belongs to the heat shock protein 70 family. Interacts strongly with the intermediate form of FXN and weakly with its mature form. Interacts with HSCB. Associates with the mitochondrial contact site and cristae organizing system (MICOS) complex, composed of at least MICOS10/MIC10, CHCHD3/MIC19, CHCHD6/MIC25, APOOL/MIC27, IMMT/MIC60, APOO/MIC23/MIC26 and QIL1/MIC13. This complex was also known under the names MINOS or MitOS complex. The MICOS complex associates with mitochondrial outer membrane proteins SAMM50, MTX1, MTX2 and DNAJC11, mitochondrial inner membrane protein TMEM11 and with HSPA9. Interacts with DNLZ, the interaction is required to prevent self-aggregation. Interacts with TESPA1. Interacts with PDPN. Interacts with NFU1, NFS1 and ISCU. Interacts with TP53; the interaction promotes TP53 degradation. Interacts (via SBD domain) with UBXN2A; the interaction with UBXN2A inhibits HSPA9 interaction with and degradation of TP53, thereby promotes TP53 translocation to the nucleus. Interacts with ITPR1 AND VDAC1; this interaction couples ITPR1 to VDAC1. Component of the TIM23 mitochondrial inner membrane pre-sequence translocase complex.

The protein resides in the mitochondrion. It is found in the nucleus. The protein localises to the nucleolus. It localises to the cytoplasm. Its subcellular location is the mitochondrion matrix. The catalysed reaction is ATP + H2O = ADP + phosphate + H(+). With respect to regulation, the chaperone activity is regulated by ATP-induced allosteric coupling of the nucleotide-binding (NBD) and substrate-binding (SBD) domains. ATP binding in the NBD leads to a conformational change in the NBD, which is transferred through the interdomain linker (IDL) to the substrate-binding domain (SBD). This elicits a reduced substrate affinity and a faster substrate exchange rate. Upon hydrolysis of ATP to ADP, the protein undergoes a conformational change that increases its affinity for substrate proteins. It cycles through repeated phases of ATP hydrolysis and nucleotide exchange, facilitating repeated cycles of substrate binding and release. Functions in collaboration with co-chaperones. Functions with the co-chaperone, DNLZ, to maintain solubility and regulate ATP hydrolysis. Nucleotide exchange factors, GRPEL1 and GRPEL2, accelerate nucleotide exchange. In terms of biological role, mitochondrial chaperone that plays a key role in mitochondrial protein import, folding, and assembly. Plays an essential role in the protein quality control system, the correct folding of proteins, the re-folding of misfolded proteins, and the targeting of proteins for subsequent degradation. These processes are achieved through cycles of ATP binding, ATP hydrolysis, and ADP release, mediated by co-chaperones. In mitochondria, it associates with the TIM (translocase of the inner membrane) protein complex to assist in the import and folding of mitochondrial proteins. Plays an important role in mitochondrial iron-sulfur cluster (ISC) biogenesis, interacts with and stabilizes ISC cluster assembly proteins FXN, NFU1, NFS1 and ISCU. Regulates erythropoiesis via stabilization of ISC assembly. Regulates mitochondrial calcium-dependent apoptosis by coupling two calcium channels, ITPR1 and VDAC1, at the mitochondria-associated endoplasmic reticulum (ER) membrane to facilitate calcium transport from the ER lumen to the mitochondria intermembrane space, providing calcium for the downstream calcium channel MCU, which releases it into the mitochondrial matrix. Although primarily located in the mitochondria, it is also found in other cellular compartments. In the cytosol, it associates with proteins involved in signaling, apoptosis, or senescence. It may play a role in cell cycle regulation via its interaction with and promotion of degradation of TP53. May play a role in the control of cell proliferation and cellular aging. Protects against reactive oxygen species (ROS). Extracellular HSPA9 plays a cytoprotective role by preventing cell lysis following immune attack by the membrane attack complex by disrupting formation of the complex. The protein is Stress-70 protein, mitochondrial of Homo sapiens (Human).